The primary structure comprises 1315 residues: Myopalladin (1315 aa).

Disordered regions lie at residues 19–60 (SYLA…DLPD), 81–145 (INHD…TQSK), 166–204 (HSSK…TERR), and 230–266 (EAKR…LGQP). Composition is skewed to basic and acidic residues over residues 23–35 (ETRH…RSRA) and 84–104 (DPLE…DQTK). Phosphoserine is present on residues Ser-99 and Ser-129. The segment covering 166–180 (HSSKRIRPRACKNHK) has biased composition (basic residues). Polar residues predominate over residues 184-199 (ESQNKVLQENSPTFSD). The stretch at 219–240 (DNELNHAIEQREAKRREAELAA) forms a coiled coil. Thr-249 carries the post-translational modification Phosphothreonine. The Ig-like 1 domain occupies 267-357 (PRFTQKLRSR…DSTSAEIYIE (91 aa)). Residues Cys-288 and Cys-339 are joined by a disulfide bond. A disordered region spans residues 359 to 392 (VSSSDSEGDPNKEEMNRIQKPNEVSSPPTTSAAI). The Ig-like 2 domain occupies 432 to 528 (PVFTKMLQNL…GTVSSIAQLD (97 aa)). The cysteines at positions 453 and 512 are disulfide-linked. Disordered regions lie at residues 535–652 (ISDN…VLAK), 674–704 (LQNT…SSKQ), and 725–747 (SSTS…NTPQ). A compositionally biased stretch (polar residues) spans 609–623 (SSGSGAANTSQTRPN). A Phosphoserine modification is found at Ser-641. The span at 725-741 (SSTSTATVSPSSSPVFT) shows a compositional bias: low complexity. Residue Ser-754 is modified to Phosphoserine. 2 disordered regions span residues 762 to 814 (HPST…TPVS) and 840 to 865 (NAMG…KAPQ). Residues 779–790 (PAPPSPAEPAAP) show a composition bias toward pro residues. Phosphoserine is present on residues Ser-809 and Ser-814. Phosphoserine is present on residues Ser-903 and Ser-924. 3 Ig-like domains span residues 941-1025 (PIFD…GRIS), 1068-1157 (PHFL…LELT), and 1167-1257 (PVIL…ARLD). A disulfide bond links Cys-1089 and Cys-1141.

It belongs to the myotilin/palladin family. Interacts with TTN/titin, NEB, NEBL, ACTN2 and CARP.

The protein localises to the cytoplasm. It localises to the nucleus. The protein resides in the myofibril. Its subcellular location is the sarcomere. It is found in the z line. In terms of biological role, component of the sarcomere that tethers together nebulin (skeletal muscle) and nebulette (cardiac muscle) to alpha-actinin, at the Z lines. This chain is Myopalladin (Mypn), found in Mus musculus (Mouse).